A 247-amino-acid polypeptide reads, in one-letter code: ATP synthase subunit a, chloroplastic (247 aa).

The next 5 membrane-spanning stretches (helical) occupy residues 38-58 (QVLI…AIAV), 95-115 (VPFI…GALL), 134-154 (INTT…AGLT), 199-219 (LVVV…VMFL), and 220-240 (GLFT…AYIG).

This sequence belongs to the ATPase A chain family. As to quaternary structure, F-type ATPases have 2 components, CF(1) - the catalytic core - and CF(0) - the membrane proton channel. CF(1) has five subunits: alpha(3), beta(3), gamma(1), delta(1), epsilon(1). CF(0) has four main subunits: a, b, b' and c.

Its subcellular location is the plastid. The protein localises to the chloroplast thylakoid membrane. Functionally, key component of the proton channel; it plays a direct role in the translocation of protons across the membrane. In Illicium oligandrum (Star anise), this protein is ATP synthase subunit a, chloroplastic.